Here is a 280-residue protein sequence, read N- to C-terminus: Feruloyl esterase 1 (280 aa).

Positions M1 to A20 are cleaved as a signal peptide. Disulfide bonds link C49-C278, C111-C114, and C247-C254. N99 carries N-linked (GlcNAc...) asparagine glycosylation. The Nucleophile role is filled by S153. D214 (charge relay system) is an active-site residue. The active-site Charge relay system is the H267.

This sequence belongs to the AB hydrolase superfamily. FaeA family. Post-translationally, glycosylated.

It localises to the secreted. It carries out the reaction feruloyl-polysaccharide + H2O = ferulate + polysaccharide.. With respect to regulation, metal or basic ions Mn(2+), Ni(+), Mg(2+), and NH(4)(+) decrease the activity by 4.4% to 14.1%. The enzymatic activity is inhibited by Zn(2+) at a low concentration (1 mM) but not a high concentration (5 mM). Loses about a quarter of activity by the addition of 1 mM of Cu(2+) or Fe(3+) and activity is completely suppressed when the concentration was up to 5 mM. Low concentrations (0.25 and 0.5 M) of NaCl improve the activity by 5.6 % or 8.3%, respectively. Involved in degradation of plant cell walls. Hydrolyzes the feruloyl-arabinose ester bond in arabinoxylans, and the feruloyl-galactose ester bond in pectin. The polypeptide is Feruloyl esterase 1 (Penicillium parvum (Eupenicillium parvum)).